Here is a 214-residue protein sequence, read N- to C-terminus: Adenylate kinase (214 aa).

10–15 (GAGKGT) contributes to the ATP binding site. The NMP stretch occupies residues 30 to 59 (STGDMLRAAVKAGTPLGLEAKKVMDAGQLV). AMP is bound by residues threonine 31, arginine 36, 57–59 (QLV), 85–88 (GFPR), and glutamine 92. The interval 122-159 (GRRVHPGSGRVYHIVYNPPKVEGKDDVTGEDLAIRPDD) is LID. ATP contacts are provided by residues arginine 123 and 132–133 (VY). Residues arginine 156 and arginine 167 each contribute to the AMP site. Glutamine 200 serves as a coordination point for ATP.

Belongs to the adenylate kinase family. Monomer.

It is found in the cytoplasm. The catalysed reaction is AMP + ATP = 2 ADP. It participates in purine metabolism; AMP biosynthesis via salvage pathway; AMP from ADP: step 1/1. Its function is as follows. Catalyzes the reversible transfer of the terminal phosphate group between ATP and AMP. Plays an important role in cellular energy homeostasis and in adenine nucleotide metabolism. In Shewanella loihica (strain ATCC BAA-1088 / PV-4), this protein is Adenylate kinase.